The following is a 213-amino-acid chain: Protein DMP4 (213 aa).

4 helical membrane-spanning segments follow: residues 51–71, 78–98, 142–162, and 180–200; these read LANLLPTGTVLAFQLLSPIFS, LVSKIMTSTLVAICGFSCFIL, FIDFVHAFMSLFVFGAVVLFD, and VLTALPVGVGVFSSMLFATFP.

Belongs to the plant DMP1 protein family. As to expression, expressed in leaves, flowers and siliques, especially in vascular tissues.

The protein resides in the vacuole membrane. Its function is as follows. Involved in membrane remodeling. This Arabidopsis thaliana (Mouse-ear cress) protein is Protein DMP4.